The chain runs to 91 residues: Probable Fe(2+)-trafficking protein (91 aa).

The protein belongs to the Fe(2+)-trafficking protein family.

Its function is as follows. Could be a mediator in iron transactions between iron acquisition and iron-requiring processes, such as synthesis and/or repair of Fe-S clusters in biosynthetic enzymes. The protein is Probable Fe(2+)-trafficking protein of Paraburkholderia phytofirmans (strain DSM 17436 / LMG 22146 / PsJN) (Burkholderia phytofirmans).